We begin with the raw amino-acid sequence, 315 residues long: Ribose-phosphate pyrophosphokinase (315 aa).

ATP is bound by residues 37–39 and 96–97; these read DSE and RQ. Mg(2+) is bound by residues histidine 131 and aspartate 170. Residue lysine 194 is part of the active site. D-ribose 5-phosphate is bound by residues arginine 196, aspartate 220, and 224–228; that span reads DTGGT.

This sequence belongs to the ribose-phosphate pyrophosphokinase family. Class I subfamily. As to quaternary structure, homohexamer. It depends on Mg(2+) as a cofactor.

The protein resides in the cytoplasm. The enzyme catalyses D-ribose 5-phosphate + ATP = 5-phospho-alpha-D-ribose 1-diphosphate + AMP + H(+). It participates in metabolic intermediate biosynthesis; 5-phospho-alpha-D-ribose 1-diphosphate biosynthesis; 5-phospho-alpha-D-ribose 1-diphosphate from D-ribose 5-phosphate (route I): step 1/1. Involved in the biosynthesis of the central metabolite phospho-alpha-D-ribosyl-1-pyrophosphate (PRPP) via the transfer of pyrophosphoryl group from ATP to 1-hydroxyl of ribose-5-phosphate (Rib-5-P). The polypeptide is Ribose-phosphate pyrophosphokinase (Marinomonas sp. (strain MWYL1)).